Here is a 487-residue protein sequence, read N- to C-terminus: GlcNAc-binding protein A (487 aa).

The first 29 residues, Met-1 to Ala-29, serve as a signal peptide directing secretion. Residues Tyr-30–Phe-201 form the Chitin-binding type-4 domain. The Chitin-binding type-3 domain occupies Ala-438–Trp-479.

It belongs to the GbpA family.

It localises to the secreted. Functionally, probably interacts with GlcNAc residues. May promote attachment to both epithelial cell surfaces and chitin. This is GlcNAc-binding protein A from Vibrio campbellii (strain ATCC BAA-1116).